A 349-amino-acid polypeptide reads, in one-letter code: Transcription repressor OFP5 (349 aa).

3 disordered regions span residues 1 to 20, 29 to 94, and 143 to 183; these read MMRW…GLSR, KLSG…KESN, and KQRC…GYSR. Residues 10-20 are compositionally biased toward low complexity; that stretch reads VSSSSSSGLSR. A compositionally biased stretch (basic and acidic residues) spans 37 to 48; the sequence is KPAKEKKQDEKA. Positions 49–62 are enriched in polar residues; it reads SQNISVKTSLSSTT. 2 stretches are compositionally biased toward basic and acidic residues: residues 63-94 and 143-167; these read RRSD…KESN and KQRC…DAGV. Positions 286–345 constitute an OVATE domain; sequence VVKCSSDPQKDFRDSMIEMIMENGINHPEELKELLVCYLRLNTDEYHDMIISVFQQVHND.

Interacts with BLH1, BLH2, BLH3, BLH4, BLH6 and BLH10. As to expression, expressed in roots, rosette and cauline leaves, and flower buds.

The protein resides in the nucleus. Transcriptional repressor that regulates multiple aspects of plant growth and development through the regulation of BEL1-LIKE (BLH) and KNOX TALE (KNAT) homeodomain transcription factors. Required for embryo development. The chain is Transcription repressor OFP5 (OFP5) from Arabidopsis thaliana (Mouse-ear cress).